A 371-amino-acid chain; its full sequence is Cytochrome b (371 aa).

Helical transmembrane passes span 25-45, 69-90, 105-125, and 170-190; these read FGSL…FLAI, WIMQ…YTHI, WLSG…GYVL, and FFAL…IHII. Heme b-binding residues include H75 and H89. 2 residues coordinate heme b: H174 and H188. A ubiquinone is bound at residue H193. 4 consecutive transmembrane segments (helical) span residues 218 to 238, 280 to 300, 312 to 332, and 339 to 358; these read YKDM…MTFA, LGGT…PFTH, LTQI…WTAT, and FIYI…IMNP.

This sequence belongs to the cytochrome b family. As to quaternary structure, the cytochrome bc1 complex contains 3 respiratory subunits (MT-CYB, CYC1 and UQCRFS1), 2 core proteins (UQCRC1 and UQCRC2) and probably 6 low-molecular weight proteins. Requires heme b as cofactor.

The protein resides in the mitochondrion inner membrane. Its function is as follows. Component of the ubiquinol-cytochrome c reductase complex (complex III or cytochrome b-c1 complex) that is part of the mitochondrial respiratory chain. The b-c1 complex mediates electron transfer from ubiquinol to cytochrome c. Contributes to the generation of a proton gradient across the mitochondrial membrane that is then used for ATP synthesis. The chain is Cytochrome b (MT-CYB) from Micruroides euryxanthus (Sonoran coral snake).